The chain runs to 198 residues: Glycerol-3-phosphate acyltransferase (198 aa).

The next 5 helical transmembrane spans lie at 6 to 26, 56 to 78, 83 to 101, 113 to 133, and 155 to 175; these read FLPV…GLVL, LAAG…AGYI, AAMA…PVWL, IGIL…LWLA, and FLWW…TLLL.

This sequence belongs to the PlsY family. In terms of assembly, probably interacts with PlsX.

It is found in the cell inner membrane. It catalyses the reaction an acyl phosphate + sn-glycerol 3-phosphate = a 1-acyl-sn-glycero-3-phosphate + phosphate. It participates in lipid metabolism; phospholipid metabolism. Functionally, catalyzes the transfer of an acyl group from acyl-phosphate (acyl-PO(4)) to glycerol-3-phosphate (G3P) to form lysophosphatidic acid (LPA). This enzyme utilizes acyl-phosphate as fatty acyl donor, but not acyl-CoA or acyl-ACP. The chain is Glycerol-3-phosphate acyltransferase from Bradyrhizobium diazoefficiens (strain JCM 10833 / BCRC 13528 / IAM 13628 / NBRC 14792 / USDA 110).